A 287-amino-acid chain; its full sequence is ATP synthase subunit a (287 aa).

6 helical membrane-spanning segments follow: residues 37–57, 96–116, 149–169, 187–207, 224–244, and 266–286; these read LDSV…MWLA, FIAP…AMDL, LGLS…IKGL, PVFA…EYVA, ELVF…LSGV, and TLQA…AHEA.

It belongs to the ATPase A chain family. In terms of assembly, F-type ATPases have 2 components, CF(1) - the catalytic core - and CF(0) - the membrane proton channel. CF(1) has five subunits: alpha(3), beta(3), gamma(1), delta(1), epsilon(1). CF(0) has three main subunits: a(1), b(2) and c(9-12). The alpha and beta chains form an alternating ring which encloses part of the gamma chain. CF(1) is attached to CF(0) by a central stalk formed by the gamma and epsilon chains, while a peripheral stalk is formed by the delta and b chains.

The protein resides in the cell inner membrane. Key component of the proton channel; it plays a direct role in the translocation of protons across the membrane. This chain is ATP synthase subunit a, found in Acidovorax sp. (strain JS42).